Consider the following 282-residue polypeptide: ATP synthase gamma chain (282 aa).

Belongs to the ATPase gamma chain family. As to quaternary structure, F-type ATPases have 2 components, CF(1) - the catalytic core - and CF(0) - the membrane proton channel. CF(1) has five subunits: alpha(3), beta(3), gamma(1), delta(1), epsilon(1). CF(0) has three main subunits: a, b and c.

It is found in the cell membrane. Its function is as follows. Produces ATP from ADP in the presence of a proton gradient across the membrane. The gamma chain is believed to be important in regulating ATPase activity and the flow of protons through the CF(0) complex. This chain is ATP synthase gamma chain, found in Clostridium botulinum (strain Langeland / NCTC 10281 / Type F).